Consider the following 223-residue polypeptide: Ribosomal RNA small subunit methyltransferase G (223 aa).

Residues Gly-83, Leu-88, 134–135 (AE), and Arg-152 each bind S-adenosyl-L-methionine.

It belongs to the methyltransferase superfamily. RNA methyltransferase RsmG family.

It is found in the cytoplasm. Functionally, specifically methylates the N7 position of guanine in position 518 of 16S rRNA. This Corynebacterium diphtheriae (strain ATCC 700971 / NCTC 13129 / Biotype gravis) protein is Ribosomal RNA small subunit methyltransferase G.